A 253-amino-acid chain; its full sequence is Small ribosomal subunit protein eS6 (253 aa).

The segment at 200 to 253 (KKRLAKRKQSENDYAKLLAQRKKESKVRRQEELKRRRSASMRDSKSSDKSAPQK) is disordered. A compositionally biased stretch (basic and acidic residues) spans 226–247 (VRRQEELKRRRSASMRDSKSSD).

The protein belongs to the eukaryotic ribosomal protein eS6 family. As to quaternary structure, component of the small ribosomal subunit. Part of the small subunit (SSU) processome, composed of more than 70 proteins and the RNA chaperone small nucleolar RNA (snoRNA) U3. In terms of processing, ribosomal protein S6 is the major substrate of protein kinases in eukaryote ribosomes.

The protein localises to the cytoplasm. It localises to the nucleus. Its subcellular location is the nucleolus. Functionally, component of the 40S small ribosomal subunit. Plays an important role in controlling cell growth and proliferation through the selective translation of particular classes of mRNA. Part of the small subunit (SSU) processome, first precursor of the small eukaryotic ribosomal subunit. During the assembly of the SSU processome in the nucleolus, many ribosome biogenesis factors, an RNA chaperone and ribosomal proteins associate with the nascent pre-rRNA and work in concert to generate RNA folding, modifications, rearrangements and cleavage as well as targeted degradation of pre-ribosomal RNA by the RNA exosome. The chain is Small ribosomal subunit protein eS6 (RpS6) from Spodoptera frugiperda (Fall armyworm).